The sequence spans 238 residues: Complement C1q-like protein 4 (238 aa).

Residues 1-15 (MVLLLLVAIPLLVHS) form the signal peptide. Positions 36–101 (GPRGPGPDGA…PPGPGPGGVA (66 aa)) are disordered. One can recognise a Collagen-like domain in the interval 53-96 (PPGAKGEVGRRGKAGLRGPPGPPGPRGPPGEPGRPGPPGPPGPG). A compositionally biased stretch (pro residues) spans 71-96 (PPGPPGPRGPPGEPGRPGPPGPPGPG). The region spanning 105–238 (GYVPRIAFYA…TFSGFIIYPD (134 aa)) is the C1q domain.

In terms of assembly, forms homooligomers, predominantly dimers or trimers. Forms heterooligomers with C1QL1, C1QL2 and C1QL3, when proteins are coexpressed; this interaction does not occur after secretion. Interacts with ADGRB3. As to expression, highest expression levels in testis and adipose tissue, lower levels in skeletal muscle and kidney.

It is found in the secreted. In terms of biological role, may regulate the number of excitatory synapses that are formed on hippocampus neurons. Has no effect on inhibitory synapses. May inhibit adipocyte differentiation at an early stage of the process. The protein is Complement C1q-like protein 4 (C1QL4) of Homo sapiens (Human).